The sequence spans 181 residues: ADP-ribosylation factor 2-A (181 aa).

Glycine 2 carries the N-myristoyl glycine lipid modification. Residues 24 to 31 (GLDAAGKT), 67 to 71 (DVGGQ), and 126 to 129 (NKQD) contribute to the GTP site.

It belongs to the small GTPase superfamily. Arf family.

It is found in the golgi apparatus. Activated by AGD10. In terms of biological role, GTP-binding protein involved in protein trafficking; may modulate vesicle budding and uncoating within the Golgi apparatus. In Arabidopsis thaliana (Mouse-ear cress), this protein is ADP-ribosylation factor 2-A (ARF2-A).